We begin with the raw amino-acid sequence, 383 residues long: Dual-specificity RNA methyltransferase RlmN (383 aa).

Glutamate 93 acts as the Proton acceptor in catalysis. The 241-residue stretch at 99–339 (EETRGTLCVS…TTIRKTRGDD (241 aa)) folds into the Radical SAM core domain. Cysteine 106 and cysteine 344 are disulfide-bonded. [4Fe-4S] cluster-binding residues include cysteine 113, cysteine 117, and cysteine 120. Residues 170 to 171 (GE), serine 202, 224 to 226 (SLH), and asparagine 301 contribute to the S-adenosyl-L-methionine site. The active-site S-methylcysteine intermediate is cysteine 344.

This sequence belongs to the radical SAM superfamily. RlmN family. [4Fe-4S] cluster serves as cofactor.

The protein localises to the cytoplasm. It carries out the reaction adenosine(2503) in 23S rRNA + 2 reduced [2Fe-2S]-[ferredoxin] + 2 S-adenosyl-L-methionine = 2-methyladenosine(2503) in 23S rRNA + 5'-deoxyadenosine + L-methionine + 2 oxidized [2Fe-2S]-[ferredoxin] + S-adenosyl-L-homocysteine. The enzyme catalyses adenosine(37) in tRNA + 2 reduced [2Fe-2S]-[ferredoxin] + 2 S-adenosyl-L-methionine = 2-methyladenosine(37) in tRNA + 5'-deoxyadenosine + L-methionine + 2 oxidized [2Fe-2S]-[ferredoxin] + S-adenosyl-L-homocysteine. Specifically methylates position 2 of adenine 2503 in 23S rRNA and position 2 of adenine 37 in tRNAs. m2A2503 modification seems to play a crucial role in the proofreading step occurring at the peptidyl transferase center and thus would serve to optimize ribosomal fidelity. In Ralstonia nicotianae (strain ATCC BAA-1114 / GMI1000) (Ralstonia solanacearum), this protein is Dual-specificity RNA methyltransferase RlmN.